The following is a 493-amino-acid chain: L-arabinose isomerase 1 (493 aa).

Mn(2+)-binding residues include Glu-301, Glu-326, His-343, and His-442.

This sequence belongs to the arabinose isomerase family. Mn(2+) serves as cofactor.

The catalysed reaction is beta-L-arabinopyranose = L-ribulose. Its pathway is carbohydrate degradation; L-arabinose degradation via L-ribulose; D-xylulose 5-phosphate from L-arabinose (bacterial route): step 1/3. Functionally, catalyzes the conversion of L-arabinose to L-ribulose. This chain is L-arabinose isomerase 1, found in Bacillus licheniformis (strain ATCC 14580 / DSM 13 / JCM 2505 / CCUG 7422 / NBRC 12200 / NCIMB 9375 / NCTC 10341 / NRRL NRS-1264 / Gibson 46).